A 753-amino-acid chain; its full sequence is MTILNHTLGFPRVGLRRELKKAQESYWAGNSTREELLAVGRELRARHWDQQKQAGIDLLPVGDFAWYDHVLTTSLLLGNVPARHQNKDGSVDIDTLFRIGRGRAPTGEPAAAAEMTKWFNTNYHYMVPEFVKGQQFKLTWTQLLEEVDEALALGHNVKPVLLGPVTWLWLGKVKGEQFDRLSLLNDILPVYQQVLAELEKRGIEWVQIDEPALVLELPQAWLDAYKPAYDALQGQVKLLLTTYFEGVTPNLDTITALPVQGLHVDLVHGKDGVAELHKRLPSDWLLSAGLINGRNVWRADLTEKYAQIKDIVGKRDLWVASSCSLLHSPIDLSVETRLDAEVKSWFAFALQKCHELALLRDALNSGDTAALAEWSAPIQARRHSTRVHNPAVEKRLAAITAQDSQRANVYEVRAEAQRARFKLPAWPTTTIGSFPQTTEIRTLRLDFKKGNLDANNYRTGIAEHIKQAIVEQERLGLDVLVHGEAERNDMVEYFGEHLDGFVFTQNGWVQSYGSRCVKPPIVIGDVSRPAPITVEWAKYAQSLTDKPVKGMLTGPVTILCWSFPREDVSRETIAKQIALALRDEVADLEAAGIGIIQIDEPALREGLPLRRSDWDAYLQWGVEAFRINAAVAKDDTQIHTHMCYCEFNDIMDSIAALDADVITIETSRSDMELLESFEEFDYPNEIGPGVYDIHSPNVPSVEWIEALLKKAAKRIPAERLWVNPDCGLKTRGWPETRAALANMVQAAQNLRRG.

5-methyltetrahydropteroyltri-L-glutamate-binding positions include 17–20 (RELK) and Lys-117. Residues 431 to 433 (IGS) and Glu-484 each bind L-homocysteine. Residues 431–433 (IGS) and Glu-484 each bind L-methionine. 5-methyltetrahydropteroyltri-L-glutamate-binding positions include 515–516 (RC) and Trp-561. Asp-599 is a binding site for L-homocysteine. Asp-599 provides a ligand contact to L-methionine. Glu-605 is a 5-methyltetrahydropteroyltri-L-glutamate binding site. Zn(2+)-binding residues include His-641, Cys-643, and Glu-665. His-694 functions as the Proton donor in the catalytic mechanism. Cys-726 contacts Zn(2+).

The protein belongs to the vitamin-B12 independent methionine synthase family. The cofactor is Zn(2+).

The enzyme catalyses 5-methyltetrahydropteroyltri-L-glutamate + L-homocysteine = tetrahydropteroyltri-L-glutamate + L-methionine. The protein operates within amino-acid biosynthesis; L-methionine biosynthesis via de novo pathway; L-methionine from L-homocysteine (MetE route): step 1/1. Catalyzes the transfer of a methyl group from 5-methyltetrahydrofolate to homocysteine resulting in methionine formation. In Shigella boydii serotype 4 (strain Sb227), this protein is 5-methyltetrahydropteroyltriglutamate--homocysteine methyltransferase.